The chain runs to 113 residues: Mini zinc finger protein 3 (113 aa).

The segment at tyrosine 24–valine 83 adopts a ZF-HD dimerization-type; degenerate zinc-finger fold. The disordered stretch occupies residues aspartate 93–glutamate 113. Residues glycine 97 to glutamate 113 are compositionally biased toward low complexity.

As to quaternary structure, homo- and heterodimers.

The protein resides in the cytoplasm. Inhibits zinc finger homeodomain (ZHD) transcription factors, by interacting with them to prevent both their nuclear localization and their DNA-binding properties. In Oryza sativa subsp. indica (Rice), this protein is Mini zinc finger protein 3 (MIF3).